Here is a 467-residue protein sequence, read N- to C-terminus: 3-isopropylmalate dehydratase large subunit (467 aa).

The [4Fe-4S] cluster site is built by Cys348, Cys409, and Cys412.

This sequence belongs to the aconitase/IPM isomerase family. LeuC type 1 subfamily. Heterodimer of LeuC and LeuD. [4Fe-4S] cluster serves as cofactor.

It catalyses the reaction (2R,3S)-3-isopropylmalate = (2S)-2-isopropylmalate. The protein operates within amino-acid biosynthesis; L-leucine biosynthesis; L-leucine from 3-methyl-2-oxobutanoate: step 2/4. In terms of biological role, catalyzes the isomerization between 2-isopropylmalate and 3-isopropylmalate, via the formation of 2-isopropylmaleate. In Magnetococcus marinus (strain ATCC BAA-1437 / JCM 17883 / MC-1), this protein is 3-isopropylmalate dehydratase large subunit.